Consider the following 348-residue polypeptide: Nicotinate-nucleotide--dimethylbenzimidazole phosphoribosyltransferase (348 aa).

The active-site Proton acceptor is the Glu-316.

Belongs to the CobT family.

The catalysed reaction is 5,6-dimethylbenzimidazole + nicotinate beta-D-ribonucleotide = alpha-ribazole 5'-phosphate + nicotinate + H(+). It functions in the pathway nucleoside biosynthesis; alpha-ribazole biosynthesis; alpha-ribazole from 5,6-dimethylbenzimidazole: step 1/2. In terms of biological role, catalyzes the synthesis of alpha-ribazole-5'-phosphate from nicotinate mononucleotide (NAMN) and 5,6-dimethylbenzimidazole (DMB). This is Nicotinate-nucleotide--dimethylbenzimidazole phosphoribosyltransferase from Xanthomonas campestris pv. campestris (strain 8004).